A 291-amino-acid chain; its full sequence is Phosphate import ATP-binding protein PstB (291 aa).

The ABC transporter domain maps to 45-286 (YSTQNLDLWY…PADKQTEDYI (242 aa)). Residue 77 to 84 (GPSGCGKS) coordinates ATP.

This sequence belongs to the ABC transporter superfamily. Phosphate importer (TC 3.A.1.7) family. As to quaternary structure, the complex is composed of two ATP-binding proteins (PstB), two transmembrane proteins (PstC and PstA) and a solute-binding protein (PstS).

It is found in the cell membrane. It carries out the reaction phosphate(out) + ATP + H2O = ADP + 2 phosphate(in) + H(+). Its function is as follows. Part of the ABC transporter complex PstSACB involved in phosphate import. Responsible for energy coupling to the transport system. This chain is Phosphate import ATP-binding protein PstB, found in Staphylococcus epidermidis (strain ATCC 35984 / DSM 28319 / BCRC 17069 / CCUG 31568 / BM 3577 / RP62A).